We begin with the raw amino-acid sequence, 424 residues long: Histidine--tRNA ligase (424 aa).

The protein belongs to the class-II aminoacyl-tRNA synthetase family. Homodimer.

Its subcellular location is the cytoplasm. It carries out the reaction tRNA(His) + L-histidine + ATP = L-histidyl-tRNA(His) + AMP + diphosphate + H(+). The protein is Histidine--tRNA ligase of Shigella flexneri.